We begin with the raw amino-acid sequence, 813 residues long: Sodium/hydrogen exchanger 2 (813 aa).

7 consecutive transmembrane segments (helical) span residues 108-128 (IVPE…IIFG), 139-159 (TDVF…YFMP), 170-190 (IFWY…LSLF), 210-230 (LFGS…FENI), 238-258 (ILVF…YNLF), 279-299 (FFVV…IAAF), and 309-329 (VIEP…AEMF). Asn-351 carries an N-linked (GlcNAc...) asparagine glycan. Transmembrane regions (helical) follow at residues 362–382 (YFMK…MGVS), 393–413 (AFVC…VFVL), 431–451 (FIIA…FLLP), and 460–480 (LFIT…GITI). Residues 649–661 (LRKDNSLNRERRA) show a composition bias toward basic and acidic residues. Disordered regions lie at residues 649 to 709 (LRKD…NLQP) and 736 to 813 (DVGS…NEKP). Over residues 687–696 (VSNADGNSSD) the composition is skewed to polar residues. 2 stretches are compositionally biased toward basic and acidic residues: residues 770 to 781 (KDQRFGRGREDS) and 797 to 813 (RASE…NEKP).

This sequence belongs to the monovalent cation:proton antiporter 1 (CPA1) transporter (TC 2.A.36) family. As to quaternary structure, interacts with CHP1 and CHP2. In terms of tissue distribution, predominantly in small intestine, colon, and stomach, with much lower levels in skeletal muscle, kidney, brain, testis, uterus, heart and lung.

It is found in the apical cell membrane. It carries out the reaction Na(+)(in) + H(+)(out) = Na(+)(out) + H(+)(in). Li(+) activates Na(+)/H(+) exchanger. In terms of biological role, plasma membrane Na(+)/H(+) antiporter. Mediates the electroneutral exchange of intracellular H(+) ions for extracellular Na(+). Major apical Na(+)/H(+) exchanger in the base of the colonic crypt. Controls in the colonic crypt intracellular pH (pHi) to direct colonic epithelial cell differentiation into the absorptive enterocyte lineage at the expense of the secretory lineage. The sequence is that of Sodium/hydrogen exchanger 2 (Slc9a2) from Rattus norvegicus (Rat).